A 347-amino-acid chain; its full sequence is NADH-ubiquinone oxidoreductase chain 2 (347 aa).

A run of 10 helical transmembrane segments spans residues 1–21 (MNPI…TIVM), 25–45 (HWLT…PMLM), 59–79 (YFLT…INLM), 96–116 (IILT…FWVP), 148–168 (IINL…GGWG), 178–198 (IMAY…IYNP), 200–220 (LTML…MLLI), 237–257 (MPLI…LPPL), 274–294 (NSII…YFYM), and 326–346 (LSPL…MMIL).

Belongs to the complex I subunit 2 family. In terms of assembly, core subunit of respiratory chain NADH dehydrogenase (Complex I) which is composed of 45 different subunits. Interacts with TMEM242.

Its subcellular location is the mitochondrion inner membrane. It carries out the reaction a ubiquinone + NADH + 5 H(+)(in) = a ubiquinol + NAD(+) + 4 H(+)(out). Its function is as follows. Core subunit of the mitochondrial membrane respiratory chain NADH dehydrogenase (Complex I) which catalyzes electron transfer from NADH through the respiratory chain, using ubiquinone as an electron acceptor. Essential for the catalytic activity and assembly of complex I. This is NADH-ubiquinone oxidoreductase chain 2 from Gardnerycteris crenulata (Striped hairy-nosed bat).